A 390-amino-acid polypeptide reads, in one-letter code: Magnesium-protoporphyrin IX monomethyl ester [oxidative] cyclase (390 aa).

The tract at residues 1–20 is disordered; the sequence is MSQSTIESTNKKEINKGKAP.

The protein belongs to the AcsF family. Requires Fe cation as cofactor.

The catalysed reaction is Mg-protoporphyrin IX 13-monomethyl ester + 3 NADPH + 3 O2 + 2 H(+) = 3,8-divinyl protochlorophyllide a + 3 NADP(+) + 5 H2O. It participates in porphyrin-containing compound metabolism; chlorophyll biosynthesis (light-independent). Catalyzes the formation of the isocyclic ring in chlorophyll biosynthesis. Mediates the cyclase reaction, which results in the formation of divinylprotochlorophyllide (Pchlide) characteristic of all chlorophylls from magnesium-protoporphyrin IX 13-monomethyl ester (MgPMME). This Prochlorococcus marinus (strain MIT 9301) protein is Magnesium-protoporphyrin IX monomethyl ester [oxidative] cyclase.